Reading from the N-terminus, the 87-residue chain is Small ribosomal subunit protein eS21 (87 aa).

This sequence belongs to the eukaryotic ribosomal protein eS21 family. Component of the small ribosomal subunit. Mature ribosomes consist of a small (40S) and a large (60S) subunit. The 40S subunit contains about 33 different proteins and 1 molecule of RNA (18S). The 60S subunit contains about 49 different proteins and 3 molecules of RNA (25S, 5.8S and 5S).

The protein localises to the cytoplasm. Functionally, required for the processing of the 20S rRNA-precursor to mature 18S rRNA in a late step of the maturation of 40S ribosomal subunits. Has a physiological role leading to 18S rRNA stability. The sequence is that of Small ribosomal subunit protein eS21 (RPS21) from Kluyveromyces lactis (strain ATCC 8585 / CBS 2359 / DSM 70799 / NBRC 1267 / NRRL Y-1140 / WM37) (Yeast).